The primary structure comprises 468 residues: Protein ABHD15 (468 aa).

Residues 1–23 (MPPWGAALALILAVLALLGLLGP) form the signal peptide. Residues 33–61 (VGERTLPGAQDRDDGEEADGGGPADQFSD) form a disordered region. Active-site charge relay system residues include Asp360 and His391. A Phosphoserine modification is found at Ser434.

Belongs to the AB hydrolase superfamily. AB hydrolase 4 family. As to quaternary structure, interacts with PDE3B; this interaction regulates PDE3B's stability and expression and, thereby, impacts the antilipolytic action of insulin.

The protein resides in the secreted. In terms of biological role, may regulate adipocyte lipolysis and liver lipid accumulation. The polypeptide is Protein ABHD15 (Homo sapiens (Human)).